The following is a 464-amino-acid chain: NADH-quinone oxidoreductase subunit N (464 aa).

The next 14 helical transmembrane spans lie at Phe-6–Gly-26, Ser-36–Phe-56, Cys-75–Ala-95, Tyr-101–His-121, Phe-123–Phe-143, Phe-157–Gly-177, Leu-197–Val-217, Pro-231–Leu-253, Val-257–Gly-279, Phe-293–Val-313, Pro-317–Leu-337, Ala-360–Phe-380, Phe-395–Phe-415, and Asn-439–Leu-459.

This sequence belongs to the complex I subunit 2 family. As to quaternary structure, NDH-1 is composed of 14 different subunits. Subunits NuoA, H, J, K, L, M, N constitute the membrane sector of the complex.

It is found in the cell inner membrane. It carries out the reaction a quinone + NADH + 5 H(+)(in) = a quinol + NAD(+) + 4 H(+)(out). In terms of biological role, NDH-1 shuttles electrons from NADH, via FMN and iron-sulfur (Fe-S) centers, to quinones in the respiratory chain. The immediate electron acceptor for the enzyme in this species is believed to be ubiquinone. Couples the redox reaction to proton translocation (for every two electrons transferred, four hydrogen ions are translocated across the cytoplasmic membrane), and thus conserves the redox energy in a proton gradient. This is NADH-quinone oxidoreductase subunit N from Anaplasma phagocytophilum (strain HZ).